Consider the following 943-residue polypeptide: Glycine dehydrogenase (decarboxylating) (943 aa).

The residue at position 695 (lysine 695) is an N6-(pyridoxal phosphate)lysine.

Belongs to the GcvP family. In terms of assembly, the glycine cleavage system is composed of four proteins: P, T, L and H. Pyridoxal 5'-phosphate serves as cofactor.

It carries out the reaction N(6)-[(R)-lipoyl]-L-lysyl-[glycine-cleavage complex H protein] + glycine + H(+) = N(6)-[(R)-S(8)-aminomethyldihydrolipoyl]-L-lysyl-[glycine-cleavage complex H protein] + CO2. Its function is as follows. The glycine cleavage system catalyzes the degradation of glycine. The P protein binds the alpha-amino group of glycine through its pyridoxal phosphate cofactor; CO(2) is released and the remaining methylamine moiety is then transferred to the lipoamide cofactor of the H protein. In Jannaschia sp. (strain CCS1), this protein is Glycine dehydrogenase (decarboxylating).